Reading from the N-terminus, the 245-residue chain is tRNA (guanine-N(1)-)-methyltransferase (245 aa).

S-adenosyl-L-methionine contacts are provided by residues glycine 113 and 133 to 138 (IGDYVL).

The protein belongs to the RNA methyltransferase TrmD family. Homodimer.

The protein localises to the cytoplasm. The catalysed reaction is guanosine(37) in tRNA + S-adenosyl-L-methionine = N(1)-methylguanosine(37) in tRNA + S-adenosyl-L-homocysteine + H(+). Functionally, specifically methylates guanosine-37 in various tRNAs. The protein is tRNA (guanine-N(1)-)-methyltransferase of Histophilus somni (strain 129Pt) (Haemophilus somnus).